Here is a 742-residue protein sequence, read N- to C-terminus: Two pore calcium channel protein 1 (742 aa).

The segment at 1 to 37 (MSEAEAPLITEEAAERGLASSGSRRLSDGAGGQGSRK) is disordered. Residues 1–82 (MSEAEAPLIT…NDTRFGRAMS (82 aa)) are Cytoplasmic-facing. A helical transmembrane segment spans residues 83–103 (FYFVYLRLDWLWSLNLFALIL). Residues 104-140 (LNFLEKPLWCRKDALQAYDQRDLYFLGQLPYFSKTES) lie on the Extracellular side of the membrane. The chain crosses the membrane as a helical span at residues 141–161 (LIYEGLTLVILVMDIFCPLSY). The Cytoplasmic portion of the chain corresponds to 162–176 (EGLNIFWRSTTNKLK). The helical transmembrane segment at 177-197 (IVLLFILACDILVFAFSSQPF) threads the bilayer. The Extracellular segment spans residues 198–204 (RLAPYIR). Residues 205–226 (VVFLIMTIRELRMCAITLAGLI) form a helical; Voltage-sensor membrane-spanning segment. A helical membrane pass occupies residues 227–247 (GTYLNVLALSLLFLLFASWLA). The Extracellular portion of the chain corresponds to 248–258 (YVTFEDTPQGK). The segment at residues 259–273 (TIFSSYGVTLYQMFV) is an intramembrane region (pore-forming). The Extracellular segment spans residues 274–296 (LFTTSNNPDVWVHAYKIPRWYSL). A helical transmembrane segment spans residues 297 to 317 (FFIVYVLLGVYFLTNLILAVI). The Cytoplasmic portion of the chain corresponds to 318 to 446 (YDSFKEQFAK…SFVRSRMFEY (129 aa)). EF-hand domains lie at 335 to 370 (IRKN…LNKY) and 376 to 411 (TSRE…IAIK). The helical transmembrane segment at 447–467 (IIVFVLLINLVAVIIETTLDI) threads the bilayer. The Extracellular segment spans residues 468 to 480 (ENSSSQETWQEVE). Asn-469 carries N-linked (GlcNAc...) asparagine glycosylation. Residues 481–501 (FFLGWIYVAEMALKIFSLGFG) traverse the membrane as a helical segment. The Cytoplasmic segment spans residues 502–510 (AYWMEGQNK). A helical membrane pass occupies residues 511 to 531 (FDFVLTWTIFIGETLTFAFPS). Residues 532 to 540 (KLPFLSNGE) are Extracellular-facing. The helical; Voltage-sensor transmembrane segment at 541-558 (WIRYLLLGRVLRLTRILL) threads the bilayer. The Cytoplasmic portion of the chain corresponds to 559–582 (QVQRFRAFVATFFTLMSSLMPYLG). Residues 583-603 (IVFCVLCMYCSIGLQIFGGIV) traverse the membrane as a helical segment. Topologically, residues 604–627 (YAGNPTLEETDLFNNDYLLFNFND) are extracellular. Residues 628-642 (YPSGMVTLFNLLVMG) constitute an intramembrane region (pore-forming). At 643-663 (NWQVWMESYWQLTGTSWSLIY) the chain is on the extracellular side. The helical transmembrane segment at 664–684 (FVSFYLISILLLLNLIVAFVL) threads the bilayer. Residues 685–742 (EAFFAEMELEKGEEVDIQNPTSGGIKKRRSMRVRSKGTMVDILLHHMLSNELDGSQNS) lie on the Cytoplasmic side of the membrane.

It belongs to the calcium channel alpha-1 subunit (TC 1.A.1.11) family. Two pore calcium channel subfamily. As to quaternary structure, homodimer.

It localises to the membrane. Inhibited by Al(3+). Functions as a voltage-gated inward-rectifying Ca(2+) channel (VDCC) across the plasma membrane that mediates sucrose-induced Ca(2+) influx in autotrophically grown leaf cells. Acts as the major ROS-responsive Ca(2+) channel and is the possible target of Al-dependent inhibition. Plays a regulatory role in defense responses. The chain is Two pore calcium channel protein 1 (TPC1) from Triticum aestivum (Wheat).